We begin with the raw amino-acid sequence, 353 residues long: Uroporphyrinogen decarboxylase (353 aa).

Substrate contacts are provided by residues 28 to 32 (RQAGR), D78, Y155, S210, and H325.

It belongs to the uroporphyrinogen decarboxylase family. Homodimer.

It localises to the cytoplasm. The catalysed reaction is uroporphyrinogen III + 4 H(+) = coproporphyrinogen III + 4 CO2. It functions in the pathway porphyrin-containing compound metabolism; protoporphyrin-IX biosynthesis; coproporphyrinogen-III from 5-aminolevulinate: step 4/4. Its function is as follows. Catalyzes the decarboxylation of four acetate groups of uroporphyrinogen-III to yield coproporphyrinogen-III. This is Uroporphyrinogen decarboxylase from Nostoc punctiforme (strain ATCC 29133 / PCC 73102).